Consider the following 452-residue polypeptide: Pup--protein ligase (452 aa).

Glutamate 9 lines the Mg(2+) pocket. ATP is bound at residue arginine 53. Tyrosine 55 serves as a coordination point for Mg(2+). The Proton acceptor role is filled by aspartate 57. Glutamate 63 is a Mg(2+) binding site. Positions 66 and 419 each coordinate ATP.

The protein belongs to the Pup ligase/Pup deamidase family. Pup-conjugating enzyme subfamily.

It catalyses the reaction ATP + [prokaryotic ubiquitin-like protein]-L-glutamate + [protein]-L-lysine = ADP + phosphate + N(6)-([prokaryotic ubiquitin-like protein]-gamma-L-glutamyl)-[protein]-L-lysine.. It functions in the pathway protein degradation; proteasomal Pup-dependent pathway. It participates in protein modification; protein pupylation. In terms of biological role, catalyzes the covalent attachment of the prokaryotic ubiquitin-like protein modifier Pup to the proteasomal substrate proteins, thereby targeting them for proteasomal degradation. This tagging system is termed pupylation. The ligation reaction involves the side-chain carboxylate of the C-terminal glutamate of Pup and the side-chain amino group of a substrate lysine. The protein is Pup--protein ligase of Actinosynnema mirum (strain ATCC 29888 / DSM 43827 / JCM 3225 / NBRC 14064 / NCIMB 13271 / NRRL B-12336 / IMRU 3971 / 101).